Here is a 147-residue protein sequence, read N- to C-terminus: UPF0306 protein YpAngola_A4021 (147 aa).

This sequence belongs to the UPF0306 family.

The protein is UPF0306 protein YpAngola_A4021 of Yersinia pestis bv. Antiqua (strain Angola).